The following is a 597-amino-acid chain: Gamma-terpinene synthase, chloroplastic (597 aa).

Residues 1 to 47 (MATLSMQVSILSKQVKNLNSFGMRASKLPMVARRVDVSTTRLRPICS) constitute a chloroplast transit peptide. Residues D350 and D354 each coordinate Mn(2+). The DDXXD motif signature appears at 350 to 354 (DDVYD). 2 homodimerization regions span residues 356–362 (YGTLDEL) and 428–465 (EAKW…FTLP). 2 residues coordinate Mn(2+): D494 and E502.

This sequence belongs to the terpene synthase family. As to quaternary structure, homodimer. It depends on Mn(2+) as a cofactor. Requires Mg(2+) as cofactor.

The protein resides in the plastid. The protein localises to the chloroplast. The catalysed reaction is (2E)-geranyl diphosphate = gamma-terpinene + diphosphate. The protein operates within secondary metabolite biosynthesis; terpenoid biosynthesis. Its function is as follows. Involved in the biosynthesis of phenolic monoterpenes natural products thymol and carvacrol which have a broad range of biological activities acting as antimicrobial compounds, insecticides, antioxidants and pharmaceutical agents. Monoterpene synthase which catalyzes the conversion of geranyl diphosphate (GPP) to gamma-terpinene and minor amounts of other monoterpenes (e.g. alpha-thujene, alpha-terpinene, myrcene, sabinene, (+)-R-limonene, alpha-pinene and alpha-phellandrene). This is Gamma-terpinene synthase, chloroplastic from Thymus caespititius (Cretan thyme).